A 354-amino-acid polypeptide reads, in one-letter code: Hydrophobic dipeptide epimerase (354 aa).

Substrate is bound by residues Thr134, Lys159, and 159–161 (KIK). Position 189 (Asp189) interacts with Mg(2+). A substrate-binding site is contributed by Asn191. Mg(2+) contacts are provided by Glu215 and Asp240. Residues Lys264, 292–295 (CMAE), and 318–320 (DLD) each bind substrate.

It belongs to the mandelate racemase/muconate lactonizing enzyme family. Mg(2+) is required as a cofactor.

Catalyzes the epimerization of L-Ile-L-Tyr to L-Ile-D-Tyr (in vitro). Catalyzes the epimerization of dipeptides, with a preference for substrates with a hydrophobic or basic amino acid in the first position, followed by an aromatic residue in the second position. Has epimerase activity with L-Ile-L-Tyr, L-Val-L-Tyr and L-Arg-L-Tyr (in vitro). This is Hydrophobic dipeptide epimerase from Enterococcus faecalis (strain ATCC 700802 / V583).